A 286-amino-acid polypeptide reads, in one-letter code: Polyamine aminopropyltransferase (286 aa).

One can recognise a PABS domain in the interval 1–235 (MSDYQETLYE…GAMTFAWGAT (235 aa)). Residue Gln30 participates in S-methyl-5'-thioadenosine binding. The spermidine site is built by His61 and Asp85. S-methyl-5'-thioadenosine is bound by residues Glu105 and 137-138 (DG). Asp155 (proton acceptor) is an active-site residue. Residue 155–158 (DSTD) participates in spermidine binding. Pro162 contributes to the S-methyl-5'-thioadenosine binding site.

This sequence belongs to the spermidine/spermine synthase family. In terms of assembly, homodimer or homotetramer.

It is found in the cytoplasm. The enzyme catalyses S-adenosyl 3-(methylsulfanyl)propylamine + putrescine = S-methyl-5'-thioadenosine + spermidine + H(+). It participates in amine and polyamine biosynthesis; spermidine biosynthesis; spermidine from putrescine: step 1/1. Functionally, catalyzes the irreversible transfer of a propylamine group from the amino donor S-adenosylmethioninamine (decarboxy-AdoMet) to putrescine (1,4-diaminobutane) to yield spermidine. The polypeptide is Polyamine aminopropyltransferase (Pseudomonas syringae pv. tomato (strain ATCC BAA-871 / DC3000)).